A 193-amino-acid polypeptide reads, in one-letter code: Ribosome maturation factor RimM (193 aa).

The PRC barrel domain occupies 112-193; it reads VDEYYWIDLI…CITVDWGLDF (82 aa).

It belongs to the RimM family. In terms of assembly, binds ribosomal protein uS19.

It localises to the cytoplasm. An accessory protein needed during the final step in the assembly of 30S ribosomal subunit, possibly for assembly of the head region. Essential for efficient processing of 16S rRNA. May be needed both before and after RbfA during the maturation of 16S rRNA. It has affinity for free ribosomal 30S subunits but not for 70S ribosomes. The polypeptide is Ribosome maturation factor RimM (Methylibium petroleiphilum (strain ATCC BAA-1232 / LMG 22953 / PM1)).